The following is a 365-amino-acid chain: Cobalt-precorrin-5B C(1)-methyltransferase (365 aa).

This sequence belongs to the CbiD family.

The enzyme catalyses Co-precorrin-5B + S-adenosyl-L-methionine = Co-precorrin-6A + S-adenosyl-L-homocysteine. It participates in cofactor biosynthesis; adenosylcobalamin biosynthesis; cob(II)yrinate a,c-diamide from sirohydrochlorin (anaerobic route): step 6/10. In terms of biological role, catalyzes the methylation of C-1 in cobalt-precorrin-5B to form cobalt-precorrin-6A. This chain is Cobalt-precorrin-5B C(1)-methyltransferase, found in Moorella thermoacetica (strain ATCC 39073 / JCM 9320).